Here is an 857-residue protein sequence, read N- to C-terminus: Phosphoenolpyruvate carboxylase (857 aa).

Active-site residues include H144 and K530.

This sequence belongs to the PEPCase type 1 family. In terms of assembly, homotetramer. Requires Mg(2+) as cofactor. The N-terminus is blocked.

It catalyses the reaction oxaloacetate + phosphate = phosphoenolpyruvate + hydrogencarbonate. Functionally, forms oxaloacetate, a four-carbon dicarboxylic acid source for the tricarboxylic acid cycle. In Thermus sp. (strain 71), this protein is Phosphoenolpyruvate carboxylase (ppc).